We begin with the raw amino-acid sequence, 421 residues long: MAAALRRGYKVLRSVSHFECRAQHTKPSLKQEPGLGFSFELTEQQKEFQTIARKFAREEIIPVAPDYDKSGEYPFPLIKRAWELGLINTHIPESCGGLGLGTFDACLITEELAYGCTGVQTAIEANSLGQMPVIIAGNDQQKKKYLGRMTEQPMMCAYCVTEPSAGSDVAGIKTKAEKKGDEYVINGQKMWITNGGKANWYFVLTRSNPDPKVPASKAFTGFIVEADTPGIHIGKKELNMGQRCSDTRGITFEDVRVPKENVLIGEGAGFKIAMGAFDRTRPTVAAGAVGLAQRALDEATKYALDRKTFGKLLVEHQGVSFLLAEMAMKVELARLSYQRAAWEVDSGRRNTYFASIAKAFAGDIANQLATDAVQIFGGYGFNTEYPVEKLMRDAKIYQIYEGTAQIQRLIIAREHIEKYKN.

The N-terminal 25 residues, 1–25 (MAAALRRGYKVLRSVSHFECRAQHT), are a transit peptide targeting the mitochondrion. Position 69 is an N6-acetyllysine; alternate (Lys-69). Lys-69 bears the N6-succinyllysine; alternate mark. Position 79 is an N6-acetyllysine (Lys-79). 158–167 (YCVTEPSAGS) is a binding site for FAD. Ser-167 is a binding site for octanoyl-CoA. Residue Lys-179 is modified to N6-succinyllysine. 191 to 193 (WIT) serves as a coordination point for FAD. Position 212 is an N6-acetyllysine; alternate (Lys-212). An N6-succinyllysine; alternate modification is found at Lys-212. Residue Ser-216 participates in octanoyl-CoA binding. Lys-217, Lys-259, and Lys-271 each carry N6-acetyllysine; alternate. An N6-succinyllysine; alternate mark is found at Lys-217, Lys-259, and Lys-271. 2 residues coordinate octanoyl-CoA: Asp-278 and Arg-281. Position 301 is an N6-acetyllysine (Lys-301). Residues 306–308 (RKT) and 316–317 (HQ) contribute to the FAD site. Octanoyl-CoA-binding residues include Arg-349 and Thr-351. Thr-351 bears the Phosphothreonine mark. 374–378 (QIFGG) serves as a coordination point for FAD. Glu-401 provides a ligand contact to octanoyl-CoA. The Proton acceptor role is filled by Glu-401. 402-405 (GTAQ) contributes to the FAD binding site.

It belongs to the acyl-CoA dehydrogenase family. Homotetramer. Interacts with the heterodimeric electron transfer flavoprotein ETF. FAD serves as cofactor. In terms of processing, acetylated. Could occur at proximity of the cofactor-binding sites and reduce the catalytic activity. Could be deacetylated by SIRT3.

It localises to the mitochondrion matrix. It catalyses the reaction a medium-chain 2,3-saturated fatty acyl-CoA + oxidized [electron-transfer flavoprotein] + H(+) = a medium-chain (2E)-enoyl-CoA + reduced [electron-transfer flavoprotein]. The catalysed reaction is pentanoyl-CoA + oxidized [electron-transfer flavoprotein] + H(+) = (2E)-pentenoyl-CoA + reduced [electron-transfer flavoprotein]. It carries out the reaction hexanoyl-CoA + oxidized [electron-transfer flavoprotein] + H(+) = (2E)-hexenoyl-CoA + reduced [electron-transfer flavoprotein]. The enzyme catalyses octanoyl-CoA + oxidized [electron-transfer flavoprotein] + H(+) = (2E)-octenoyl-CoA + reduced [electron-transfer flavoprotein]. It catalyses the reaction decanoyl-CoA + oxidized [electron-transfer flavoprotein] + H(+) = (2E)-decenoyl-CoA + reduced [electron-transfer flavoprotein]. The catalysed reaction is dodecanoyl-CoA + oxidized [electron-transfer flavoprotein] + H(+) = (2E)-dodecenoyl-CoA + reduced [electron-transfer flavoprotein]. It carries out the reaction tetradecanoyl-CoA + oxidized [electron-transfer flavoprotein] + H(+) = (2E)-tetradecenoyl-CoA + reduced [electron-transfer flavoprotein]. The enzyme catalyses oxidized [electron-transfer flavoprotein] + hexadecanoyl-CoA + H(+) = (2E)-hexadecenoyl-CoA + reduced [electron-transfer flavoprotein]. Its pathway is lipid metabolism; mitochondrial fatty acid beta-oxidation. Functionally, medium-chain specific acyl-CoA dehydrogenase is one of the acyl-CoA dehydrogenases that catalyze the first step of mitochondrial fatty acid beta-oxidation, an aerobic process breaking down fatty acids into acetyl-CoA and allowing the production of energy from fats. The first step of fatty acid beta-oxidation consists in the removal of one hydrogen from C-2 and C-3 of the straight-chain fatty acyl-CoA thioester, resulting in the formation of trans-2-enoyl-CoA. Electron transfer flavoprotein (ETF) is the electron acceptor that transfers electrons to the main mitochondrial respiratory chain via ETF-ubiquinone oxidoreductase (ETF dehydrogenase). Among the different mitochondrial acyl-CoA dehydrogenases, medium-chain specific acyl-CoA dehydrogenase acts specifically on acyl-CoAs with saturated 6 to 12 carbons long primary chains. In Rattus norvegicus (Rat), this protein is Medium-chain specific acyl-CoA dehydrogenase, mitochondrial.